The sequence spans 89 residues: Small ribosomal subunit protein uS15 (89 aa).

This sequence belongs to the universal ribosomal protein uS15 family. In terms of assembly, part of the 30S ribosomal subunit. Forms a bridge to the 50S subunit in the 70S ribosome, contacting the 23S rRNA.

In terms of biological role, one of the primary rRNA binding proteins, it binds directly to 16S rRNA where it helps nucleate assembly of the platform of the 30S subunit by binding and bridging several RNA helices of the 16S rRNA. Forms an intersubunit bridge (bridge B4) with the 23S rRNA of the 50S subunit in the ribosome. This Jannaschia sp. (strain CCS1) protein is Small ribosomal subunit protein uS15.